The sequence spans 776 residues: 3-isopropylmalate dehydratase (776 aa).

3 residues coordinate [4Fe-4S] cluster: Cys-357, Cys-418, and Cys-421. Residues 482–493 (SAPKVEVRHDTD) show a composition bias toward basic and acidic residues. Disordered regions lie at residues 482–518 (SAPK…SDVA) and 525–544 (DIPV…SADA). Positions 527–538 (PVSNSSTQSPGS) are enriched in polar residues.

Belongs to the aconitase/IPM isomerase family. As to quaternary structure, monomer. [4Fe-4S] cluster is required as a cofactor.

The catalysed reaction is (2R,3S)-3-isopropylmalate = (2S)-2-isopropylmalate. It participates in amino-acid biosynthesis; L-leucine biosynthesis; L-leucine from 3-methyl-2-oxobutanoate: step 2/4. In terms of biological role, catalyzes the isomerization between 2-isopropylmalate and 3-isopropylmalate, via the formation of 2-isopropylmaleate. This chain is 3-isopropylmalate dehydratase (LEU1), found in Eremothecium gossypii (strain ATCC 10895 / CBS 109.51 / FGSC 9923 / NRRL Y-1056) (Yeast).